A 294-amino-acid chain; its full sequence is Endonuclease 3 (294 aa).

The first 24 residues, 1-24 (MGWSLRMWIVSILVLTQLVNGALC), serve as a signal peptide directing secretion. Residues Trp25 and His30 each coordinate a divalent metal cation. Residue 25 to 30 (WGDAGH) coordinates substrate. Cys34 and Cys65 are joined by a disulfide. A divalent metal cation contacts are provided by Asp69 and His84. Substrate is bound by residues 69-75 (DEIKKLP), 84-87 (HFAD), and 94-99 (NYEYSR). Disulfide bonds link Cys93/Cys241, Cys101/Cys106, and Cys221/Cys228. Substrate-binding residues include Asn113 and Tyr131. Asn113 is a glycosylation site (N-linked (GlcNAc...) asparagine). N-linked (GlcNAc...) asparagine glycosylation occurs at Asn132. His142, Asp146, His152, His176, and Asp180 together coordinate a divalent metal cation. Residues 142–191 (HYMGDIHQPLHEGFIGDLGGNKIKVHWYNQETNLHRVWDDMIIESALETY) are substrate binding. 3 N-linked (GlcNAc...) asparagine glycosylation sites follow: Asn193, Asn224, and Asn247. Residues 279–294 (GTLNRIFSAKRKLARA) constitute a propeptide, removed in mature form.

This sequence belongs to the nuclease type I family. Monomer. The cofactor is Zn(2+). Mn(2+) is required as a cofactor.

The catalysed reaction is Endonucleolytic cleavage to 5'-phosphomononucleotide and 5'-phosphooligonucleotide end-products.. In terms of biological role, endonuclease that can use RNA and single-stranded DNA as substrates. In contradiction with PubMed:23620482, cannot hydrolyze single-stranded DNA and does not cleave mismatches. This is Endonuclease 3 from Arabidopsis thaliana (Mouse-ear cress).